Reading from the N-terminus, the 154-residue chain is Insulin-like growth factor 1 (154 aa).

Positions 50-78 (GPETLCGAELVDALQFVCGDRGFYFNKPT) are b. 3 disulfide bridges follow: Cys55/Cys97, Cys67/Cys110, and Cys96/Cys101. Positions 79–90 (GYGSSSRRAPQT) are c. Positions 91 to 111 (GIVDECCFRSCDLRRLEMYCA) are a. A d region spans residues 112-119 (PLKAAKSA). Residues 120–154 (RSVRAQRHTDMPKAQKEVHLKNTSRGSAGNKNYRM) constitute a propeptide, e peptide. The tract at residues 121-154 (SVRAQRHTDMPKAQKEVHLKNTSRGSAGNKNYRM) is disordered. Over residues 126–139 (RHTDMPKAQKEVHL) the composition is skewed to basic and acidic residues. Residues 140-154 (KNTSRGSAGNKNYRM) are compositionally biased toward polar residues.

It belongs to the insulin family. Forms a ternary complex with IGFR1 and ITGAV:ITGB3. Forms a ternary complex with IGFR1 and ITGA6:ITGB4. Forms a ternary complex with IGFBP3 and ALS.

The protein localises to the secreted. In terms of biological role, the insulin-like growth factors, isolated from plasma, are structurally and functionally related to insulin but have a much higher growth-promoting activity. May be a physiological regulator of [1-14C]-2-deoxy-D-glucose (2DG) transport and glycogen synthesis in osteoblasts. Stimulates glucose transport in bone-derived osteoblastic (PyMS) cells and is effective at much lower concentrations than insulin, not only regarding glycogen and DNA synthesis but also with regard to enhancing glucose uptake. May play a role in synapse maturation. Ca(2+)-dependent exocytosis of IGF1 is required for sensory perception of smell in the olfactory bulb. Acts as a ligand for IGF1R. Binds to the alpha subunit of IGF1R, leading to the activation of the intrinsic tyrosine kinase activity which autophosphorylates tyrosine residues in the beta subunit thus initiating a cascade of down-stream signaling events leading to activation of the PI3K-AKT/PKB and the Ras-MAPK pathways. Binds to integrins ITGAV:ITGB3 and ITGA6:ITGB4. Its binding to integrins and subsequent ternary complex formation with integrins and IGFR1 are essential for IGF1 signaling. Induces the phosphorylation and activation of IGFR1, MAPK3/ERK1, MAPK1/ERK2 and AKT1. As part of the MAPK/ERK signaling pathway, acts as a negative regulator of apoptosis in cardiomyocytes via promotion of STUB1/CHIP-mediated ubiquitination and degradation of ICER-type isoforms of CREM. In Ovis aries (Sheep), this protein is Insulin-like growth factor 1.